A 548-amino-acid polypeptide reads, in one-letter code: 5-aminolevulinate synthase, mitochondrial (548 aa).

Residues 1 to 22 (MQRSIFARFGNSSAAVSTLNRL) constitute a mitochondrion transit peptide. Substrate contacts are provided by Arg91, Ser204, and Lys223. The pyridoxal 5'-phosphate site is built by Ser256, His284, and Thr334. Lys337 is an active-site residue. At Lys337 the chain carries N6-(pyridoxal phosphate)lysine. Thr366 and Thr367 together coordinate pyridoxal 5'-phosphate. Residue Thr452 coordinates substrate.

Belongs to the class-II pyridoxal-phosphate-dependent aminotransferase family. Homodimer. Interacts with MCX1. It depends on pyridoxal 5'-phosphate as a cofactor.

The protein localises to the mitochondrion matrix. The catalysed reaction is succinyl-CoA + glycine + H(+) = 5-aminolevulinate + CO2 + CoA. It participates in porphyrin-containing compound metabolism; protoporphyrin-IX biosynthesis; 5-aminolevulinate from glycine: step 1/1. Ihnhibited by hemin. Functionally, catalyzes the synthesis of 5-aminolevulinate (ALA) from succinyl-CoA and glycine, the first and rate-limiting step in heme biosynthesis. The protein is 5-aminolevulinate synthase, mitochondrial of Saccharomyces cerevisiae (strain ATCC 204508 / S288c) (Baker's yeast).